We begin with the raw amino-acid sequence, 1724 residues long: Protein mono-ADP-ribosyltransferase PARP4 (1724 aa).

A BRCT domain is found at 1–94 (MVMGIFANCI…RLLDVKNYDP (94 aa)). The Nuclear localization signal motif lies at 19–25 (PQQQKKK). Residues 97 to 123 (PLDITPPPDQKASSSEVKTEGLCPDSA) are disordered. Phosphothreonine is present on residues T101 and T333. Residues 242 to 370 (SEQLQALLLE…ETNLSKPNPP (129 aa)) form the PARP alpha-helical domain. Residues 369 to 573 (PPSLAKYRAL…FSMPGDQIKD (205 aa)) enclose the PARP catalytic domain. One can recognise a VIT domain in the interval 607–735 (SSTKAGLQDA…KVLIKITYIT (129 aa)). In terms of domain architecture, VWFA spans 876–1046 (EVIICLDCSS…KQIEDQMTRL (171 aa)). Residue S1236 is modified to Phosphoserine. Positions 1237–1249 (KRKHRKIPFSKRK) match the Nuclear localization signal motif. At S1335 the chain carries Phosphoserine. The segment at 1408–1452 (SAQSAPLQHPGGFTTRPSAGTFPELDSPQLHFSLPTDPDPIRGFG) is disordered. R1476 is subject to Asymmetric dimethylarginine. S1504 carries the post-translational modification Phosphoserine. The tract at residues 1562-1724 (VCIQHWQDAV…LHRVLHYSQG (163 aa)) is interaction with the major vault protein.

The protein belongs to the ARTD/PARP family. In terms of assembly, component of the vault ribonucleoprotein particle, at least composed of MVP, PARP4 and one or more vault RNAs (vRNAs). Interacts with TEP1. As to expression, widely expressed; the highest levels are in the kidney; also detected in heart, placenta, lung, liver, skeletal muscle, spleen, leukocytes and pancreas.

The protein localises to the cytoplasm. It is found in the nucleus. Its subcellular location is the cytoskeleton. It localises to the spindle. It catalyses the reaction L-aspartyl-[protein] + NAD(+) = 4-O-(ADP-D-ribosyl)-L-aspartyl-[protein] + nicotinamide. It carries out the reaction L-glutamyl-[protein] + NAD(+) = 5-O-(ADP-D-ribosyl)-L-glutamyl-[protein] + nicotinamide. Functionally, mono-ADP-ribosyltransferase that mediates mono-ADP-ribosylation of target proteins. This Homo sapiens (Human) protein is Protein mono-ADP-ribosyltransferase PARP4.